Here is a 182-residue protein sequence, read N- to C-terminus: ATP synthase subunit delta (182 aa).

This sequence belongs to the ATPase delta chain family. F-type ATPases have 2 components, F(1) - the catalytic core - and F(0) - the membrane proton channel. F(1) has five subunits: alpha(3), beta(3), gamma(1), delta(1), epsilon(1). F(0) has three main subunits: a(1), b(2) and c(10-14). The alpha and beta chains form an alternating ring which encloses part of the gamma chain. F(1) is attached to F(0) by a central stalk formed by the gamma and epsilon chains, while a peripheral stalk is formed by the delta and b chains.

The protein resides in the cell inner membrane. In terms of biological role, f(1)F(0) ATP synthase produces ATP from ADP in the presence of a proton or sodium gradient. F-type ATPases consist of two structural domains, F(1) containing the extramembraneous catalytic core and F(0) containing the membrane proton channel, linked together by a central stalk and a peripheral stalk. During catalysis, ATP synthesis in the catalytic domain of F(1) is coupled via a rotary mechanism of the central stalk subunits to proton translocation. Its function is as follows. This protein is part of the stalk that links CF(0) to CF(1). It either transmits conformational changes from CF(0) to CF(1) or is implicated in proton conduction. This is ATP synthase subunit delta from Myxococcus xanthus (strain DK1622).